The sequence spans 428 residues: Elongation factor 1-alpha (428 aa).

A tr-type G domain is found at 5–217 (KPHVNIVFIG…DQIPEPEKPI (213 aa)). A G1 region spans residues 14–21 (GHVDHGKS). 14–21 (GHVDHGKS) contributes to the GTP binding site. Residue Ser21 coordinates Mg(2+). Residues 68–72 (GITID) form a G2 region. The tract at residues 89-92 (DAPG) is G3. GTP-binding positions include 89 to 93 (DAPGH) and 144 to 147 (NKMD). The G4 stretch occupies residues 144–147 (NKMD). Residues 181 to 183 (SAW) are G5.

Belongs to the TRAFAC class translation factor GTPase superfamily. Classic translation factor GTPase family. EF-Tu/EF-1A subfamily.

It localises to the cytoplasm. It catalyses the reaction GTP + H2O = GDP + phosphate + H(+). GTP hydrolase that promotes the GTP-dependent binding of aminoacyl-tRNA to the A-site of ribosomes during protein biosynthesis. The polypeptide is Elongation factor 1-alpha (Pyrococcus horikoshii (strain ATCC 700860 / DSM 12428 / JCM 9974 / NBRC 100139 / OT-3)).